The chain runs to 129 residues: Large ribosomal subunit protein bL12 (129 aa).

This sequence belongs to the bacterial ribosomal protein bL12 family. Homodimer. Part of the ribosomal stalk of the 50S ribosomal subunit. Forms a multimeric L10(L12)X complex, where L10 forms an elongated spine to which 2 to 4 L12 dimers bind in a sequential fashion. Binds GTP-bound translation factors.

In terms of biological role, forms part of the ribosomal stalk which helps the ribosome interact with GTP-bound translation factors. Is thus essential for accurate translation. The polypeptide is Large ribosomal subunit protein bL12 (Mycobacteroides abscessus (strain ATCC 19977 / DSM 44196 / CCUG 20993 / CIP 104536 / JCM 13569 / NCTC 13031 / TMC 1543 / L948) (Mycobacterium abscessus)).